A 123-amino-acid chain; its full sequence is MKKSGLLNPDLCYAIARLGHTDTWAVADCGLPIPEHVEIIDLALVFGIPTFEQVLNALKPEVVVEGAVIAEGTPERIREMVDTDVEVVTHEELKAQLAECAFVIRTGETTAYANVIFKSGVAF.

H20 (proton donor) is an active-site residue. Substrate contacts are provided by residues D28, H90, and 112–114 (YAN).

This sequence belongs to the RbsD / FucU family. RbsD subfamily. As to quaternary structure, homodecamer.

It localises to the cytoplasm. It carries out the reaction beta-D-ribopyranose = beta-D-ribofuranose. Its pathway is carbohydrate metabolism; D-ribose degradation; D-ribose 5-phosphate from beta-D-ribopyranose: step 1/2. Catalyzes the interconversion of beta-pyran and beta-furan forms of D-ribose. The sequence is that of D-ribose pyranase from Corynebacterium glutamicum (strain R).